We begin with the raw amino-acid sequence, 429 residues long: Inositol-3-phosphate synthase 1 (429 aa).

A helical membrane pass occupies residues 12 to 32; it reads LGVLVVGVGGAVATTMIVGTL. NAD(+)-binding residues include Ala-22, Val-23, Asp-79, Ala-116, Ala-165, Thr-167, Tyr-201, Ser-244, Arg-276, Asp-277, and Lys-290.

This sequence belongs to the myo-inositol 1-phosphate synthase family. Homotetramer. NAD(+) is required as a cofactor.

It localises to the membrane. The enzyme catalyses D-glucose 6-phosphate = 1D-myo-inositol 3-phosphate. Its pathway is polyol metabolism; myo-inositol biosynthesis; myo-inositol from D-glucose 6-phosphate: step 1/2. In terms of biological role, key enzyme in myo-inositol biosynthesis pathway that catalyzes the conversion of glucose 6-phosphate to 1D-myo-inositol 3-phosphate in a NAD-dependent manner. The sequence is that of Inositol-3-phosphate synthase 1 from Bacteroides thetaiotaomicron (strain ATCC 29148 / DSM 2079 / JCM 5827 / CCUG 10774 / NCTC 10582 / VPI-5482 / E50).